The following is a 50-amino-acid chain: Thymosin beta-4 (50 aa).

The tract at residues 1–50 (MLLPATMSDKPDMAEIEKFDKSKLKKTETQEKNPLPSKETIEQEKQAGES) is disordered. Phosphoserine is present on Ser8. Over residues 9–31 (DKPDMAEIEKFDKSKLKKTETQE) the composition is skewed to basic and acidic residues. At Lys10 the chain carries N6-acetyllysine. Lys18 is subject to N6-acetyllysine; alternate. Residue Lys18 forms a Glycyl lysine isopeptide (Lys-Gly) (interchain with G-Cter in SUMO2); alternate linkage. A Phosphothreonine modification is found at Thr29. Residue Lys32 is modified to N6-acetyllysine. The residue at position 37 (Ser37) is a Phosphoserine. An N6-acetyllysine modification is found at Lys38. The segment covering 39–50 (ETIEQEKQAGES) has biased composition (basic and acidic residues). A Phosphothreonine modification is found at Thr40. Lys45 carries the post-translational modification N6-acetyllysine.

It belongs to the thymosin beta family. In terms of assembly, identified in a complex composed of ACTA1, COBL, GSN AND TMSB4X. Interacts with SERPINB1. In terms of processing, acSDKP is inactivated by ACE, which removes the dipeptide Lys-Pro from its C-terminus. In terms of tissue distribution, originally found in thymus but it is widely distributed in many tissues.

It localises to the cytoplasm. The protein localises to the cytoskeleton. In terms of biological role, plays an important role in the organization of the cytoskeleton. Binds to and sequesters actin monomers (G actin) and therefore inhibits actin polymerization. Potent inhibitor of bone marrow derived stem cell differentiation. Acts by inhibits the entry of hematopoietic pluripotent stem cells into the S-phase. This Mus musculus (Mouse) protein is Thymosin beta-4 (Tmsb4x).